The chain runs to 166 residues: Seed allergenic protein RAG2 (166 aa).

A signal peptide spans 1 to 26; sequence MASNKVVFSALLLIIVSVLAATATMA. Intrachain disulfides connect Cys41-Cys93, Cys55-Cys81, Cys63-Cys125, Cys82-Cys141, and Cys95-Cys153. Asn147 carries N-linked (GlcNAc...) asparagine glycosylation.

It belongs to the cereal trypsin/alpha-amylase inhibitor family. Post-translationally, five disulfide bonds are present.

The protein resides in the secreted. Seed storage protein. This chain is Seed allergenic protein RAG2 (RAG2), found in Oryza sativa subsp. japonica (Rice).